Here is a 124-residue protein sequence, read N- to C-terminus: Small ribosomal subunit protein uS12 (124 aa).

Asp-89 bears the 3-methylthioaspartic acid mark. N6-acetyllysine is present on Lys-108.

Belongs to the universal ribosomal protein uS12 family. Part of the 30S ribosomal subunit. Contacts proteins S8 and S17. May interact with IF1 in the 30S initiation complex.

With S4 and S5 plays an important role in translational accuracy. In terms of biological role, interacts with and stabilizes bases of the 16S rRNA that are involved in tRNA selection in the A site and with the mRNA backbone. Located at the interface of the 30S and 50S subunits, it traverses the body of the 30S subunit contacting proteins on the other side and probably holding the rRNA structure together. The combined cluster of proteins S8, S12 and S17 appears to hold together the shoulder and platform of the 30S subunit. The polypeptide is Small ribosomal subunit protein uS12 (Escherichia coli (strain K12 / MC4100 / BW2952)).